Reading from the N-terminus, the 367-residue chain is Queuine tRNA-ribosyltransferase (367 aa).

The active-site Proton acceptor is the Asp89. Substrate-binding positions include 89-93, Asp143, Gln187, and Gly214; that span reads DSGGF. The RNA binding stretch occupies residues 245 to 251; sequence GVGTPAD. Asp264 serves as the catalytic Nucleophile. The RNA binding; important for wobble base 34 recognition stretch occupies residues 269–273; it reads TRNAR. Zn(2+) is bound by residues Cys302, Cys304, Cys307, and His333.

Belongs to the queuine tRNA-ribosyltransferase family. In terms of assembly, homodimer. Within each dimer, one monomer is responsible for RNA recognition and catalysis, while the other monomer binds to the replacement base PreQ1. It depends on Zn(2+) as a cofactor.

The catalysed reaction is 7-aminomethyl-7-carbaguanine + guanosine(34) in tRNA = 7-aminomethyl-7-carbaguanosine(34) in tRNA + guanine. It participates in tRNA modification; tRNA-queuosine biosynthesis. Catalyzes the base-exchange of a guanine (G) residue with the queuine precursor 7-aminomethyl-7-deazaguanine (PreQ1) at position 34 (anticodon wobble position) in tRNAs with GU(N) anticodons (tRNA-Asp, -Asn, -His and -Tyr). Catalysis occurs through a double-displacement mechanism. The nucleophile active site attacks the C1' of nucleotide 34 to detach the guanine base from the RNA, forming a covalent enzyme-RNA intermediate. The proton acceptor active site deprotonates the incoming PreQ1, allowing a nucleophilic attack on the C1' of the ribose to form the product. After dissociation, two additional enzymatic reactions on the tRNA convert PreQ1 to queuine (Q), resulting in the hypermodified nucleoside queuosine (7-(((4,5-cis-dihydroxy-2-cyclopenten-1-yl)amino)methyl)-7-deazaguanosine). In Nitrosospira multiformis (strain ATCC 25196 / NCIMB 11849 / C 71), this protein is Queuine tRNA-ribosyltransferase.